The following is a 650-amino-acid chain: DNA ligase (650 aa).

NAD(+) contacts are provided by residues 30-34 (DEQYD) and 79-80 (SL). Lys110 functions as the N6-AMP-lysine intermediate in the catalytic mechanism. Residues Arg131, Glu165, and Lys304 each contribute to the NAD(+) site. Zn(2+) is bound by residues Cys398, Cys401, Cys414, and Cys419. The BRCT domain occupies 573–650 (DNNNVFFNKT…EEEFLAQINK (78 aa)).

This sequence belongs to the NAD-dependent DNA ligase family. LigA subfamily. It depends on Mg(2+) as a cofactor. Requires Mn(2+) as cofactor.

The catalysed reaction is NAD(+) + (deoxyribonucleotide)n-3'-hydroxyl + 5'-phospho-(deoxyribonucleotide)m = (deoxyribonucleotide)n+m + AMP + beta-nicotinamide D-nucleotide.. Functionally, DNA ligase that catalyzes the formation of phosphodiester linkages between 5'-phosphoryl and 3'-hydroxyl groups in double-stranded DNA using NAD as a coenzyme and as the energy source for the reaction. It is essential for DNA replication and repair of damaged DNA. This is DNA ligase from Helicobacter hepaticus (strain ATCC 51449 / 3B1).